Here is a 350-residue protein sequence, read N- to C-terminus: Integrin beta-1-binding protein 2 (350 aa).

Residues C5, C10, C24, and H27 each contribute to the Zn(2+) site. The region spanning 5-64 is the CHORD 1 domain; the sequence is CYNKGCGQHFDPNTNLPDSCRYHPGVPIFHDALKGWSCCRKRTVDFSEFLNIKGCTVGLH. Positions 28 to 31 match the SH3-binding motif; that stretch reads PGVP. Zn(2+) contacts are provided by C42, C43, C59, and H64. Residues 70–79 carry the SH3-binding motif; the sequence is PEVPPQPEGP. Residues 72-92 are disordered; sequence VPPQPEGPATSSLQEQKPLNT. Polar residues predominate over residues 80-92; that stretch reads ATSSLQEQKPLNT. C150 and C155 together coordinate Zn(2+). The CHORD 2 domain occupies 150–209; the sequence is CQNPGCDAVYQGPESDATPCTYHPGAPRFHEGMKSWSCCGIQTLDFGAFLAQPGCRVGRH. The SH2-binding motif lies at 159–162; it reads YQGP. Zn(2+)-binding residues include C169 and H172. The SH3-binding motif lies at 173–176; that stretch reads PGAP. 4 residues coordinate Zn(2+): C187, C188, C204, and H209. Positions 216–305 constitute a CS domain; sequence PASCRHDWHQ…ADPGSWAQLE (90 aa). The short motif at 235–238 is the SH2-binding element; it reads YGQI. The segment at 317–350 is disordered; it reads GVLLEMDEEESEDSDDDLSWTEEEDEEEEEAMGE. Over residues 321-350 the composition is skewed to acidic residues; sequence EMDEEESEDSDDDLSWTEEEDEEEEEAMGE.

As to quaternary structure, interacts with beta-1 integrin subunit. This interaction is regulated by divalent cations, and it occurs only in absence of calcium. In terms of tissue distribution, expressed in skeletal and cardiac muscles but not in other tissues. Is localized in rows flanking the Z line containing alpha-actinin.

In terms of biological role, may play a role during maturation and/or organization of muscles cells. This chain is Integrin beta-1-binding protein 2 (Itgb1bp2), found in Mus musculus (Mouse).